The primary structure comprises 804 residues: Phenylalanine--tRNA ligase beta subunit (804 aa).

Residues 39–147 (GPSFSNVVVA…PNLPLGEDLA (109 aa)) form the tRNA-binding domain. Residues 402–480 (ETVGEIHLRC…RIHGYDNIPV (79 aa)) enclose the B5 domain. Mg(2+) contacts are provided by Asp-458, Asp-464, Glu-467, and Glu-468. Residues 711–804 (SRYPESSRDV…IIDQTGARVR (94 aa)) enclose the FDX-ACB domain.

This sequence belongs to the phenylalanyl-tRNA synthetase beta subunit family. Type 1 subfamily. As to quaternary structure, tetramer of two alpha and two beta subunits. Requires Mg(2+) as cofactor.

It is found in the cytoplasm. The catalysed reaction is tRNA(Phe) + L-phenylalanine + ATP = L-phenylalanyl-tRNA(Phe) + AMP + diphosphate + H(+). This chain is Phenylalanine--tRNA ligase beta subunit, found in Syntrophus aciditrophicus (strain SB).